Reading from the N-terminus, the 292-residue chain is UDP-N-acetylenolpyruvoylglucosamine reductase (292 aa).

Residues 21-186 (QAGGLVDYLA…ISATFELQPD (166 aa)) enclose the FAD-binding PCMH-type domain. Arg-165 is a catalytic residue. Ser-215 (proton donor) is an active-site residue. The active site involves Glu-285.

It belongs to the MurB family. FAD is required as a cofactor.

The protein resides in the cytoplasm. It catalyses the reaction UDP-N-acetyl-alpha-D-muramate + NADP(+) = UDP-N-acetyl-3-O-(1-carboxyvinyl)-alpha-D-glucosamine + NADPH + H(+). It participates in cell wall biogenesis; peptidoglycan biosynthesis. Its function is as follows. Cell wall formation. The protein is UDP-N-acetylenolpyruvoylglucosamine reductase of Leuconostoc mesenteroides subsp. mesenteroides (strain ATCC 8293 / DSM 20343 / BCRC 11652 / CCM 1803 / JCM 6124 / NCDO 523 / NBRC 100496 / NCIMB 8023 / NCTC 12954 / NRRL B-1118 / 37Y).